Consider the following 843-residue polypeptide: uncharacterized protein (843 aa).

A DNA-binding region (zn(2)-C6 fungal-type) is located at residues 15 to 42 (CLRCKQRKIKCDKLWPTCSKCKASSSIC).

Its subcellular location is the nucleus. Its function is as follows. Required for growth on non-fermentable carbon sources. This is an uncharacterized protein from Saccharomyces cerevisiae (strain ATCC 204508 / S288c) (Baker's yeast).